Here is a 208-residue protein sequence, read N- to C-terminus: Ribosomal RNA small subunit methyltransferase G (208 aa).

S-adenosyl-L-methionine contacts are provided by residues Gly-73, Leu-78, 124–125, and Arg-139; that span reads VE.

Belongs to the methyltransferase superfamily. RNA methyltransferase RsmG family.

Its subcellular location is the cytoplasm. The catalysed reaction is guanosine(527) in 16S rRNA + S-adenosyl-L-methionine = N(7)-methylguanosine(527) in 16S rRNA + S-adenosyl-L-homocysteine. In terms of biological role, specifically methylates the N7 position of guanine in position 527 of 16S rRNA. The sequence is that of Ribosomal RNA small subunit methyltransferase G from Aeromonas salmonicida (strain A449).